The primary structure comprises 424 residues: Histidine--tRNA ligase (424 aa).

This sequence belongs to the class-II aminoacyl-tRNA synthetase family. In terms of assembly, homodimer.

It is found in the cytoplasm. It catalyses the reaction tRNA(His) + L-histidine + ATP = L-histidyl-tRNA(His) + AMP + diphosphate + H(+). The sequence is that of Histidine--tRNA ligase from Bacillus licheniformis (strain ATCC 14580 / DSM 13 / JCM 2505 / CCUG 7422 / NBRC 12200 / NCIMB 9375 / NCTC 10341 / NRRL NRS-1264 / Gibson 46).